Here is a 501-residue protein sequence, read N- to C-terminus: Dye-decolorizing peroxidase (501 aa).

The signal sequence occupies residues 1-21 (MRLSPSFLSLALVIFVGEVVA). Positions 22–60 (RNVVARASNPASVTGTRKVSLLKNVAGLPAVPTAQQVAV) are excised as a propeptide. Asp-228 functions as the Proton acceptor in the catalytic mechanism. The N-linked (GlcNAc...) asparagine glycan is linked to Asn-352. His-367 lines the heme pocket. N-linked (GlcNAc...) asparagine glycosylation is present at Asn-403.

It belongs to the DyP-type peroxidase family. Heme b serves as cofactor.

The protein localises to the secreted. The catalysed reaction is Reactive Blue 5 + 2 H2O2 = 2,2'-disulfonyl azobenzene + 3-[(4-amino-6-chloro-1,3,5-triazin-2-yl)amino]benzenesulfonate + phthalate + 2 H2O + 2 H(+). It catalyses the reaction 2 a phenolic donor + H2O2 = 2 a phenolic radical donor + 2 H2O. Manganese-independent peroxidase that is able to convert a large number of compounds, but its physiological substrate is not known. In addition to classic peroxidase substrates (e.g. 2,6-dimethoxyphenol), oxidizes dyes such as Reactive Blue 5 and Reactive Black 5. This Exidia glandulosa (Black witch's butter) protein is Dye-decolorizing peroxidase.